A 354-amino-acid chain; its full sequence is Glycine betaine/proline betaine transport system permease protein ProW (354 aa).

The tract at residues 1–41 (MADQNNPWDTTPAADSAAQSADAWGTPTTAPTDGGGADWLT) is disordered. Over 1-99 (MADQNNPWDT…VDYILNGFQQ (99 aa)) the chain is Cytoplasmic. The segment covering 13-32 (AADSAAQSADAWGTPTTAPT) has biased composition (low complexity). A helical membrane pass occupies residues 100-120 (LLLGMPAPVAIIVFALIAWQI). A topological domain (periplasmic) is located at residue serine 121. A helical transmembrane segment spans residues 122–142 (GVGMGVATLVSLIAIGAIGAW). Residues 143–148 (SQAMVT) are Cytoplasmic-facing. The 180-residue stretch at 145–324 (AMVTLALVLT…ILAIILDRLT (180 aa)) folds into the ABC transmembrane type-1 domain. The helical transmembrane segment at 149–169 (LALVLTALLFCIVIGLPLGIW) threads the bilayer. The Periplasmic portion of the chain corresponds to 170–198 (LARSPRAAKIIRPLLDAMQTTPAFVYLVP). Residues 199–219 (IVMLFGIGNVPGVVVTIIFAL) traverse the membrane as a helical segment. Residues 220-270 (PPIIRLTILGINQVPADLIEASRSFGASPRQMLFKVQLPLAMPTIMAGVNQ) are Cytoplasmic-facing. Residues 271 to 291 (TLMLALSMVVIASMIAVGGLG) traverse the membrane as a helical segment. Residues 292–300 (QMVLRGIGR) lie on the Periplasmic side of the membrane. The chain crosses the membrane as a helical span at residues 301 to 321 (LDMGLATVGGVGIVILAIILD). The Cytoplasmic segment spans residues 322-354 (RLTQAVGRDSRSRGNRRWYTTGPVGLLTRPFIK).

The protein belongs to the binding-protein-dependent transport system permease family. CysTW subfamily. The complex is composed of two ATP-binding proteins (ProV), two transmembrane proteins (ProW) and a solute-binding protein (ProX).

It is found in the cell inner membrane. Part of the ProU ABC transporter complex involved in glycine betaine and proline betaine uptake. Probably responsible for the translocation of the substrate across the membrane. The sequence is that of Glycine betaine/proline betaine transport system permease protein ProW from Escherichia coli (strain K12).